The primary structure comprises 157 residues: Probable succinate transporter subunit YjjB (157 aa).

The next 4 helical transmembrane spans lie at 2–22 (GIISFIFALAEDMLLAAIPAV), 55–75 (AGFNIEWATFLAALLVGSIGI), 87–107 (IFTVAAVIPMFPGISAYTAMI), and 129–149 (FLKASSIVGALSIGLSIPGLW).

It belongs to the ThrE exporter (TC 2.A.79) family. As to quaternary structure, the transporter is composed of YjjB and YjjP.

The protein resides in the cell inner membrane. Functionally, involved in succinate export with YjjP. Both proteins are required for export. The chain is Probable succinate transporter subunit YjjB from Klebsiella pneumoniae subsp. pneumoniae (strain ATCC 700721 / MGH 78578).